A 362-amino-acid chain; its full sequence is MERIVVTLGERSYPITIASGLFNEPASFLPLKSGEQVMLVTNETLAPLYLDKVRGVLEQAGVNVDSVILPDGEQYKSLAVLDTVFTALLQKPHGRDTTLVALGGGVVGDLTGFAAASYQRGVRFIQVPTTLLSQVDSSVGGKTAVNHPLGKNMIGAFYQPASVVVDLDCLKTLPPRELASGLAEVIKYGIILDGAFFNWLEENLDALLRLDGPAMAYCIRRCCELKPQVVAADERETGLRALLNLGHTFGHAIEAEMGYGNWLHGEAVAAGMVMAARTSERLGQFSSAETQRIITLLTRAGLPVNGPREMSAQAYLPHMLRDKKVLAGEMRLILPLAIGKSEVRSGVSHELVLNAIADCQSA.

NAD(+) contacts are provided by residues 71–76 (DGEQYK), 105–109 (GVVGD), 129–130 (TT), Lys142, Lys151, and 169–172 (CLKT). Positions 184, 247, and 264 each coordinate Zn(2+).

Belongs to the sugar phosphate cyclases superfamily. Dehydroquinate synthase family. Co(2+) is required as a cofactor. Zn(2+) serves as cofactor. Requires NAD(+) as cofactor.

It localises to the cytoplasm. It carries out the reaction 7-phospho-2-dehydro-3-deoxy-D-arabino-heptonate = 3-dehydroquinate + phosphate. It functions in the pathway metabolic intermediate biosynthesis; chorismate biosynthesis; chorismate from D-erythrose 4-phosphate and phosphoenolpyruvate: step 2/7. In terms of biological role, catalyzes the conversion of 3-deoxy-D-arabino-heptulosonate 7-phosphate (DAHP) to dehydroquinate (DHQ). In Escherichia coli O6:K15:H31 (strain 536 / UPEC), this protein is 3-dehydroquinate synthase.